The chain runs to 265 residues: 5'-nucleotidase SurE (265 aa).

Residues Asp-8, Asp-9, Ser-39, and Asn-96 each contribute to the a divalent metal cation site.

Belongs to the SurE nucleotidase family. A divalent metal cation is required as a cofactor.

The protein localises to the cytoplasm. It catalyses the reaction a ribonucleoside 5'-phosphate + H2O = a ribonucleoside + phosphate. Nucleotidase that shows phosphatase activity on nucleoside 5'-monophosphates. In Dehalococcoides mccartyi (strain ATCC BAA-2100 / JCM 16839 / KCTC 5957 / BAV1), this protein is 5'-nucleotidase SurE.